Reading from the N-terminus, the 282-residue chain is Uracil-DNA glycosylase (282 aa).

The segment at 15-40 is disordered; the sequence is SAASKRKSASNTENIPEKVPAGNENQ. Residue aspartate 123 is the Proton acceptor of the active site.

Belongs to the uracil-DNA glycosylase (UDG) superfamily. UNG family.

Its subcellular location is the mitochondrion. It is found in the nucleus. The catalysed reaction is Hydrolyzes single-stranded DNA or mismatched double-stranded DNA and polynucleotides, releasing free uracil.. Inhibited by UGI, a B.subtilis bacteriophage PBS2 peptide inhibitor. Excises uracil residues from the DNA which can arise as a result of misincorporation of dUMP residues by DNA polymerase or due to deamination of cytosine. The sequence is that of Uracil-DNA glycosylase from Caenorhabditis elegans.